The sequence spans 233 residues: tRNA (guanine-N(7)-)-methyltransferase (233 aa).

The interval 1 to 22 (MIDENHPMRAAGNFFGRRHGKP) is disordered. Positions 64, 89, 116, and 138 each coordinate S-adenosyl-L-methionine. The active site involves aspartate 138. Residues lysine 142, aspartate 174, and 212–215 (TRYE) contribute to the substrate site.

It belongs to the class I-like SAM-binding methyltransferase superfamily. TrmB family.

It catalyses the reaction guanosine(46) in tRNA + S-adenosyl-L-methionine = N(7)-methylguanosine(46) in tRNA + S-adenosyl-L-homocysteine. It functions in the pathway tRNA modification; N(7)-methylguanine-tRNA biosynthesis. Catalyzes the formation of N(7)-methylguanine at position 46 (m7G46) in tRNA. The polypeptide is tRNA (guanine-N(7)-)-methyltransferase (Brucella abortus (strain 2308)).